Reading from the N-terminus, the 752-residue chain is Translation initiation factor IF-2 (752 aa).

A disordered region spans residues 26 to 167; sequence RQGMGVKSHM…QPTQRKDKPL (142 aa). Over residues 34-47 the composition is skewed to polar residues; it reads HMSSVTPDQAQQLR. Positions 72-81 are enriched in low complexity; it reads KQNNHQAQNH. Positions 83–96 are enriched in basic and acidic residues; it reads QHHDHDKTQNERPQ. Polar residues predominate over residues 101–129; it reads SRSNNGTKDNNQHQNNGGRFGGSLNNDQG. A compositionally biased stretch (basic residues) spans 131–150; that stretch reads NGKRFNKKNKKNKKHNKNKR. A compositionally biased stretch (basic and acidic residues) spans 151 to 167; sequence LREVAHKQPTQRKDKPL. The tr-type G domain occupies 253–422; it reads TRPAVVTVMG…LLQAEMLELK (170 aa). Residues 262–269 form a G1 region; the sequence is GHVDHGKT. 262-269 serves as a coordination point for GTP; that stretch reads GHVDHGKT. A G2 region spans residues 287 to 291; it reads GITQE. The interval 308 to 311 is G3; the sequence is DTPG. GTP contacts are provided by residues 308–312 and 362–365; these read DTPGH and NKID. Residues 362-365 are G4; it reads NKID. Residues 398-400 are G5; the sequence is SAK.

Belongs to the TRAFAC class translation factor GTPase superfamily. Classic translation factor GTPase family. IF-2 subfamily.

It localises to the cytoplasm. Its function is as follows. One of the essential components for the initiation of protein synthesis. Protects formylmethionyl-tRNA from spontaneous hydrolysis and promotes its binding to the 30S ribosomal subunits. Also involved in the hydrolysis of GTP during the formation of the 70S ribosomal complex. In Limosilactobacillus reuteri (strain DSM 20016) (Lactobacillus reuteri), this protein is Translation initiation factor IF-2.